The sequence spans 491 residues: Cobyric acid synthase (491 aa).

The 177-residue stretch at 253-429 (AHRVAVVRLP…WHGSLEGDAL (177 aa)) folds into the GATase cobBQ-type domain. C334 acts as the Nucleophile in catalysis. H421 is a catalytic residue.

The protein belongs to the CobB/CobQ family. CobQ subfamily.

It participates in cofactor biosynthesis; adenosylcobalamin biosynthesis. Catalyzes amidations at positions B, D, E, and G on adenosylcobyrinic A,C-diamide. NH(2) groups are provided by glutamine, and one molecule of ATP is hydrogenolyzed for each amidation. This is Cobyric acid synthase from Mycobacterium ulcerans (strain Agy99).